An 88-amino-acid chain; its full sequence is DNA-directed RNA polymerase subunit omega (88 aa).

This sequence belongs to the RNA polymerase subunit omega family. The RNAP catalytic core consists of 2 alpha, 1 beta, 1 beta' and 1 omega subunit. When a sigma factor is associated with the core the holoenzyme is formed, which can initiate transcription.

The enzyme catalyses RNA(n) + a ribonucleoside 5'-triphosphate = RNA(n+1) + diphosphate. Promotes RNA polymerase assembly. Latches the N- and C-terminal regions of the beta' subunit thereby facilitating its interaction with the beta and alpha subunits. The protein is DNA-directed RNA polymerase subunit omega of Actinobacillus succinogenes (strain ATCC 55618 / DSM 22257 / CCUG 43843 / 130Z).